A 587-amino-acid chain; its full sequence is Probable pectinesterase/pectinesterase inhibitor 61 (587 aa).

Residues 1–23 (MGYDRLGPSGPSNPNQKDPATSL) are disordered. The span at 10–19 (GPSNPNQKDP) shows a compositional bias: polar residues. The helical transmembrane segment at 35 to 55 (ILFTLAVLVVGVVCFGIFAGI) threads the bilayer. Positions 69–223 (RKPTQAISRT…SEMVSNCLAI (155 aa)) are pectinesterase inhibitor 61. The pectinesterase 61 stretch occupies residues 273–571 (DITVSKDGSG…FTVAQFISGS (299 aa)). Residues T349 and Q379 each contribute to the substrate site. D402 functions as the Proton donor; for pectinesterase activity in the catalytic mechanism. Cysteines 416 and 436 form a disulfide. The active-site Nucleophile; for pectinesterase activity is the D423. Substrate is bound by residues R491 and W493.

It in the N-terminal section; belongs to the PMEI family. This sequence in the C-terminal section; belongs to the pectinesterase family. As to expression, expressed in siliques, floral stems and rosettes leaves.

The protein resides in the membrane. It carries out the reaction [(1-&gt;4)-alpha-D-galacturonosyl methyl ester](n) + n H2O = [(1-&gt;4)-alpha-D-galacturonosyl](n) + n methanol + n H(+). Its pathway is glycan metabolism; pectin degradation; 2-dehydro-3-deoxy-D-gluconate from pectin: step 1/5. Acts in the modification of cell walls via demethylesterification of cell wall pectin. The sequence is that of Probable pectinesterase/pectinesterase inhibitor 61 (PME61) from Arabidopsis thaliana (Mouse-ear cress).